The primary structure comprises 854 residues: Fibroblast growth factor receptor 1 (854 aa).

A signal peptide spans 1–20; the sequence is MSGLFFLLSELLILLGKINS. The Extracellular portion of the chain corresponds to 21-383; it reads VSKKSLCHPE…NFFMNSVPLS (363 aa). In terms of domain architecture, Ig-like C2-type 1 spans 29–120; that stretch reads PELFKIDNKL…SSVFFLINVT (92 aa). C50 and C102 are joined by a disulfide. N-linked (GlcNAc...) asparagine glycans are attached at residues N95, N99, N110, N118, N140, N175, N202, N248, N283, N317, and N346. 2 consecutive Ig-like C2-type domains span residues 147 to 259 and 268 to 369; these read PEMG…FTFT and PHLT…LSVI. An intrachain disulfide couples C166 to C242. Residues C288 and C353 are joined by a disulfide bond. The chain crosses the membrane as a helical span at residues 384-404; the sequence is IFLVIGFFVAIILLSLIIYCF. The Cytoplasmic portion of the chain corresponds to 405 to 854; it reads FLQYKNAVDS…SDYLEPKCLV (450 aa). One can recognise a Protein kinase domain in the interval 551-822; sequence KITNKKLGEG…EIVEILIDII (272 aa). Residues 557 to 565 and K585 contribute to the ATP site; that span reads LGEGAFGMV. Catalysis depends on D689, which acts as the Proton acceptor. Position 718 is a phosphotyrosine; by autocatalysis (Y718).

The protein belongs to the protein kinase superfamily. Tyr protein kinase family. Fibroblast growth factor receptor subfamily. Expressed in brain, stem cells and the mesenchymal cells.

The protein resides in the membrane. It carries out the reaction L-tyrosyl-[protein] + ATP = O-phospho-L-tyrosyl-[protein] + ADP + H(+). Its function is as follows. Receptor for basic fibroblast growth factor. In Dugesia japonica (Planarian), this protein is Fibroblast growth factor receptor 1 (FGFR1).